A 465-amino-acid chain; its full sequence is Putative multidrug resistance protein MdtD (465 aa).

The next 13 membrane-spanning stretches (helical) occupy residues 12–32, 49–69, 72–92, 102–124, 138–158, 165–185, 195–215, 219–239, 267–287, 290–310, 342–362, 393–413, and 430–450; these read LWIVAFGFFMQTLDTTIVNTA, SVIVSYVLTVAVMLPASGWLA, IGVKWVFFSAIILFTFGSLMC, ILSRVLQGVGGAMMVPVGRLTVM, FVTLPGQIGPLVGPALGGFLV, WIFLINLPVGVIGALATLLLM, FDISGFIMLAIGMATLTLALD, GLGLSPLAIAGLILCGVIALG, LVGSMSARIGSGMLPFMTPIF, IGLGFSPFHAGLMMIPMIIGS, LSLPLVAIMGWTLLMPVVLFF, LLSMAMQLSMSIGVSTAGILL, and SAFLYSYLCMAIIIALPALIF.

This sequence belongs to the major facilitator superfamily. TCR/Tet family.

Its subcellular location is the cell inner membrane. This chain is Putative multidrug resistance protein MdtD, found in Yersinia pseudotuberculosis serotype O:1b (strain IP 31758).